The sequence spans 589 residues: Protein kinase G11A (589 aa).

Residues 1 to 167 form a disordered region; that stretch reads MASKAMPRAP…SACSSISSVT (167 aa). 2 stretches are compositionally biased toward polar residues: residues 15–36 and 63–76; these read NLQS…SPSK and TQHQ…TGSN. A compositionally biased stretch (basic and acidic residues) spans 91-100; that stretch reads RLADEEKGVV. The span at 142–165 shows a compositional bias: low complexity; that stretch reads SSSRCRPSTSSDVSDESACSSISS. Residues 195–533 form the Protein kinase domain; that stretch reads FKLLKKLGCG…ATEIKQHPFF (339 aa). ATP-binding positions include 201 to 209 and Lys-224; that span reads LGCGDIGSV. Residue Asp-320 is the Proton acceptor of the active site. Residues 551-589 form a disordered region; sequence RPVEIERPPKQPVSTSEPAAAPSDAAQKSSDSYLEFDFF.

It belongs to the protein kinase superfamily. Ser/Thr protein kinase family.

It catalyses the reaction L-seryl-[protein] + ATP = O-phospho-L-seryl-[protein] + ADP + H(+). The catalysed reaction is L-threonyl-[protein] + ATP = O-phospho-L-threonyl-[protein] + ADP + H(+). In terms of biological role, may play a role in the regulation of metabolism and signal transduction processes. The sequence is that of Protein kinase G11A from Oryza sativa subsp. japonica (Rice).